The primary structure comprises 907 residues: Protein MEI2-like 4 (907 aa).

Residues 28–58 (QFGFMKNNPMPEGGVDRSSNLPTSSWTSDSY) are disordered. The segment covering 44–54 (RSSNLPTSSWT) has biased composition (polar residues). RRM domains are found at residues 211 to 284 (RILF…YSIP) and 295 to 368 (GALW…PTCP). The disordered stretch occupies residues 856–907 (AGPNAGDQEPFPMGSNIRSRPGKHRTNSIENYTNFSSSSDNRDEPANGNDSM). Residues 883 to 894 (SIENYTNFSSSS) are compositionally biased toward polar residues.

Functionally, probable RNA-binding protein that plays a role in meiosis and vegetative growth. The sequence is that of Protein MEI2-like 4 (ML4) from Arabidopsis thaliana (Mouse-ear cress).